Here is a 419-residue protein sequence, read N- to C-terminus: Multiple organellar RNA editing factor 1, mitochondrial (419 aa).

A mitochondrion-targeting transit peptide spans 1 to 60 (MAMISHRLRRALLTATSYVNRSISSSITPASDFPSVSAAVLKRSVIGRSTEVATRAPARL). Positions 174–401 (KEYGGDKYEN…AGQPGSDQVR (228 aa)) are disordered. A compositionally biased stretch (low complexity) spans 237–252 (GPQQGYATPGQGQGTQ). Over residues 310–327 (GQGGSGNYSQGPQGGYNQ) the composition is skewed to gly residues. Over residues 342–356 (GPASGAGNLGPAPGA) the composition is skewed to low complexity. The span at 357–367 (GNPGYGQGYSG) shows a compositional bias: gly residues. Over residues 371–401 (EQNQTFPQADQRNRDWNNNNPAGQPGSDQVR) the composition is skewed to polar residues.

It belongs to the MORF family. As to quaternary structure, homodimer and heterodimer with MORF3. Heterodimers with MORF8/RIP1, MORF4/RIP4 and MORF6/RIP6. Interacts with PCMP-E90/MEF13. Interacts with PCMP-H13/MEF35.

It is found in the mitochondrion. Its function is as follows. Involved in organellar RNA editing. Required for the processing of numerous RNA editing sites in mitochondria. Binds to the mitochondrial MEF19 and MEF21 factors, two pentatricopeptide repeat-containing proteins involved in RNA editing. In Arabidopsis thaliana (Mouse-ear cress), this protein is Multiple organellar RNA editing factor 1, mitochondrial.